The primary structure comprises 362 residues: tRNA-specific 2-thiouridylase MnmA 1 (362 aa).

Residues 29–36 (AMSGGVDS) and methionine 55 each bind ATP. The active-site Nucleophile is the cysteine 109. Cysteine 109 and cysteine 201 are joined by a disulfide. Glycine 133 contacts ATP. The segment at 151–153 (KDQ) is interaction with tRNA. The Cysteine persulfide intermediate role is filled by cysteine 201.

This sequence belongs to the MnmA/TRMU family.

It is found in the cytoplasm. The enzyme catalyses S-sulfanyl-L-cysteinyl-[protein] + uridine(34) in tRNA + AH2 + ATP = 2-thiouridine(34) in tRNA + L-cysteinyl-[protein] + A + AMP + diphosphate + H(+). Functionally, catalyzes the 2-thiolation of uridine at the wobble position (U34) of tRNA, leading to the formation of s(2)U34. This Fusobacterium nucleatum subsp. nucleatum (strain ATCC 25586 / DSM 15643 / BCRC 10681 / CIP 101130 / JCM 8532 / KCTC 2640 / LMG 13131 / VPI 4355) protein is tRNA-specific 2-thiouridylase MnmA 1.